We begin with the raw amino-acid sequence, 247 residues long: VQ motif-containing protein 4 (247 aa).

The interval 1–128 is disordered; that stretch reads MENSPRYREA…SSSSASGFRL (128 aa). A Phosphoserine modification is found at S16. Residues 21–37 are compositionally biased toward low complexity; that stretch reads NSNNSCGMSSSSESNKP. 2 stretches are compositionally biased toward polar residues: residues 48–75 and 87–106; these read RSES…QMLT and LKPN…SSFS. Positions 67-76 match the VQ motif; it reads FKQVVQMLTG. Residues S106, S155, S163, S165, and S175 each carry the phosphoserine modification. At T178 the chain carries Phosphothreonine. The segment at 184-247 is disordered; the sequence is PFDRSGSSNQ…VSGSSSASTS (64 aa). Residue S194 is modified to Phosphoserine. Over residues 200–210 the composition is skewed to basic and acidic residues; sequence AEEKAMKERGF. Phosphoserine is present on S215. Phosphothreonine is present on residues T219 and T234. Phosphoserine occurs at positions 235, 239, and 243. Residues 236-247 are compositionally biased toward polar residues; that stretch reads PRVSGSSSASTS.

Interacts with MPK3 and MPK6. Post-translationally, phosphorylated on serine and threonine residues by MPK6 following treatment with the pathogen-associated molecular pattern (PAMP) flg22. MAP kinase-mediated phosphorylation after PAMP elicitation causes degradation of VQ4, allowing WRKY33 to promote transcription from defense genes.

The protein localises to the nucleus. Its function is as follows. Acts as a negative regulator of WRKY33 transcription factor activity in the promotion of defense gene expression. Acts as a negative regulator of pathogen-associated molecular pattern (PAMP)-induced responses to modulate resistance to pathogens. The chain is VQ motif-containing protein 4 from Arabidopsis thaliana (Mouse-ear cress).